We begin with the raw amino-acid sequence, 558 residues long: Dimethylaniline monooxygenase [N-oxide-forming] 4 (558 aa).

FAD-binding positions include 9–13, glutamate 32, and 40–41; these read GAGVS and LW. Residues 60 to 61 and 195 to 198 contribute to the NADP(+) site; these read TN and TGGD. Residues 517-537 traverse the membrane as a helical segment; the sequence is AWGAPVLLASLLLICKSSLFL.

It belongs to the FMO family. FAD serves as cofactor. In terms of tissue distribution, liver.

It is found in the microsome membrane. Its subcellular location is the endoplasmic reticulum membrane. The catalysed reaction is N,N-dimethylaniline + NADPH + O2 + H(+) = N,N-dimethylaniline N-oxide + NADP(+) + H2O. This protein is involved in the oxidative metabolism of a variety of xenobiotics such as drugs and pesticides. The sequence is that of Dimethylaniline monooxygenase [N-oxide-forming] 4 (FMO4) from Homo sapiens (Human).